We begin with the raw amino-acid sequence, 372 residues long: Oxoglutarate-dependent flavonoid 7-O-demethylase 1 (372 aa).

The Fe2OG dioxygenase domain maps to 221–321; the sequence is GIQALRMNYY…RLSVAAFLNP (101 aa). Positions 245, 247, and 302 each coordinate Fe cation. Arg312 lines the 2-oxoglutarate pocket.

Belongs to the iron/ascorbate-dependent oxidoreductase family. As to quaternary structure, monomer. The cofactor is Fe(2+). It depends on L-ascorbate as a cofactor. In terms of tissue distribution, accumulates in the trichomes of nevadensin-accumulating strains (e.g. cv. SD and cv. EMX-1) and in cv. SW (at protein level) but not in cv. MC.

The protein resides in the cytoplasm. It catalyses the reaction gardenin B + 2-oxoglutarate + O2 = nevadensin + formaldehyde + succinate + CO2 + H(+). The enzyme catalyses 8-hydroxysalvigenin + 2-oxoglutarate + O2 = pilosin + formaldehyde + succinate + CO2. Its pathway is flavonoid metabolism. Its activity is regulated as follows. Inhibited by prohexadione-calcium, a 2-oxoglutarate-dependent dioxygenase (2-ODD) inhibitor, thus leading to a decreased abundance of nevadensin (NEV) and absence of pilosin (PIL) production, but to the accumulation of gardenin B (GARD B) and 8-hydroxysalvigenin (8-OH-SALV). Functionally, oxoglutarate-dependent dioxygenase (2-ODD) acting as a flavonoid 7-O-demethylase involved in the biosynthesis of polymethoxylated flavonoids natural products such as nevadensin and salvigenin, aroma compounds which contribute to the flavor of sweet basil, and exhibit pharmacological activities such as anti-allergic, anti-oxidant, antibacterial, anti-proliferative, and anti-inflammatory effects. Catalyzes the 7-O-demethylation of methoxylated flavones; mediates the conversion of 8-hydroxysalvigenin (8-OH-SALV) to pilosin (PIL) and of gardenin B (GARD B) to nevadensin (NEV). This chain is Oxoglutarate-dependent flavonoid 7-O-demethylase 1, found in Ocimum basilicum (Sweet basil).